The primary structure comprises 349 residues: Phosphoribosylformylglycinamidine cyclo-ligase (349 aa).

Belongs to the AIR synthase family.

The protein localises to the cytoplasm. The catalysed reaction is 2-formamido-N(1)-(5-O-phospho-beta-D-ribosyl)acetamidine + ATP = 5-amino-1-(5-phospho-beta-D-ribosyl)imidazole + ADP + phosphate + H(+). It functions in the pathway purine metabolism; IMP biosynthesis via de novo pathway; 5-amino-1-(5-phospho-D-ribosyl)imidazole from N(2)-formyl-N(1)-(5-phospho-D-ribosyl)glycinamide: step 2/2. The sequence is that of Phosphoribosylformylglycinamidine cyclo-ligase from Trichlorobacter lovleyi (strain ATCC BAA-1151 / DSM 17278 / SZ) (Geobacter lovleyi).